The sequence spans 89 residues: Small ribosomal subunit protein uS15 (89 aa).

It belongs to the universal ribosomal protein uS15 family. As to quaternary structure, part of the 30S ribosomal subunit. Forms a bridge to the 50S subunit in the 70S ribosome, contacting the 23S rRNA.

Functionally, one of the primary rRNA binding proteins, it binds directly to 16S rRNA where it helps nucleate assembly of the platform of the 30S subunit by binding and bridging several RNA helices of the 16S rRNA. Forms an intersubunit bridge (bridge B4) with the 23S rRNA of the 50S subunit in the ribosome. The sequence is that of Small ribosomal subunit protein uS15 from Methylorubrum populi (strain ATCC BAA-705 / NCIMB 13946 / BJ001) (Methylobacterium populi).